Consider the following 150-residue polypeptide: Transcription antitermination protein NusB (150 aa).

The protein belongs to the NusB family.

In terms of biological role, involved in transcription antitermination. Required for transcription of ribosomal RNA (rRNA) genes. Binds specifically to the boxA antiterminator sequence of the ribosomal RNA (rrn) operons. The protein is Transcription antitermination protein NusB of Alcanivorax borkumensis (strain ATCC 700651 / DSM 11573 / NCIMB 13689 / SK2).